The primary structure comprises 364 residues: Dual-specificity RNA methyltransferase RlmN (364 aa).

The active-site Proton acceptor is E91. In terms of domain architecture, Radical SAM core spans 97 to 333 (ESDRGTLCIS…VTVRKTRGDD (237 aa)). A disulfide bridge links C104 with C338. Residues C111, C115, and C118 each coordinate [4Fe-4S] cluster. S-adenosyl-L-methionine is bound by residues 164–165 (GE), S196, 218–220 (SLH), and N295. Residue C338 is the S-methylcysteine intermediate of the active site.

This sequence belongs to the radical SAM superfamily. RlmN family. The cofactor is [4Fe-4S] cluster.

The protein resides in the cytoplasm. It catalyses the reaction adenosine(2503) in 23S rRNA + 2 reduced [2Fe-2S]-[ferredoxin] + 2 S-adenosyl-L-methionine = 2-methyladenosine(2503) in 23S rRNA + 5'-deoxyadenosine + L-methionine + 2 oxidized [2Fe-2S]-[ferredoxin] + S-adenosyl-L-homocysteine. The enzyme catalyses adenosine(37) in tRNA + 2 reduced [2Fe-2S]-[ferredoxin] + 2 S-adenosyl-L-methionine = 2-methyladenosine(37) in tRNA + 5'-deoxyadenosine + L-methionine + 2 oxidized [2Fe-2S]-[ferredoxin] + S-adenosyl-L-homocysteine. In terms of biological role, specifically methylates position 2 of adenine 2503 in 23S rRNA and position 2 of adenine 37 in tRNAs. m2A2503 modification seems to play a crucial role in the proofreading step occurring at the peptidyl transferase center and thus would serve to optimize ribosomal fidelity. The chain is Dual-specificity RNA methyltransferase RlmN from Neisseria meningitidis serogroup C (strain 053442).